We begin with the raw amino-acid sequence, 139 residues long: Gene 22 protein (139 aa).

The chain is Gene 22 protein (22) from Mycobacterium phage D29 (Mycobacteriophage D29).